Consider the following 321-residue polypeptide: Flagellin C (321 aa).

It belongs to the bacterial flagellin family.

It localises to the secreted. The protein resides in the bacterial flagellum. Its function is as follows. Flagellin is the subunit protein which polymerizes to form the filaments of bacterial flagella. In Rhizobium meliloti (strain 1021) (Ensifer meliloti), this protein is Flagellin C (flaC).